Here is a 943-residue protein sequence, read N- to C-terminus: MNKKHGFPLTLTALAIATAFPAYAAQAGGATPDAAQTQSLKEITVRAAKVGRRSKEATGLGKIVKTSETLNKEQVLGIRDLTRYDPGVAVVEQGNGASGGYSIRGVDKNRVAVSVDGVAQIQAFTVQGSLSGYGGRGGSGAINEIEYENISTVEIDKGAGSSDHGSGALGGAVAFRTKEAADLISDGKSWGIQAKTAYGSKNRQFMKSLGAGFSKDGWEGLLIRTERQGRETRPHGDIADGVEYGIDRLDAFRQTYDIKRKTREPFFSVEGERESKPVAKLAGYGKYLNNQLNRWVKERIEQNQPLSAEEEAQVREAQARHENLSAQAYTGGGRILPDPMDYRSGSWLAKLGYRFGGRHYVGGVFEDTKQRYDIRDMTEKQYYGTDEAEKFRDKSGVYDGDDFRDGLYFVPNIEEWKGDKNLVRGIGLKYSRTKFIDEHHRRRRMGLLYRYENEAYSDNWADKAVLSFDKQGVATDNNTLKLNCAVYPAVDKSCRASADKPYSYDSSDRFHYREQHNVLNASFEKSLKNKWTKHHLTLGFGYDASKAISRPEQLSHNAARISESTGFDENNQDKYLLGKPEVVEGSVCGYIETLRSRKCVPRKINGSNIHISLNDRFSIGKYFDFSLGGRYDRKNFTTSEELVRSGRYVDRSWNSGILFKPNRHFSVSYRASSGFRTPSFQELFGIDIYHDYPKGWQRPALKSEKAANREIGLQWKGDFGFLEISSFRNRYTDMIAVADHKTKLPNQAGQLTEIDIRDYYNAQNMSLQGVNILGKIDWNGVYGKLPEGLYTTLAYNRIKPKSVSNRPGLSLRSYALDAVQPSRYVLGFGYDQPEGKWGANIMLTYSKGKNPDELAYLAGDQKRYSTKRASSSWSTADVSAYLNLKKRLTLRAAIYNIGNYRYVTWESLRQTAESTANRHGGDSNYGRYAAPGRNFSLALEMKF.

Positions 1–27 are cleaved as a signal peptide; sequence MNKKHGFPLTLTALAIATAFPAYAAQA. One can recognise a TBDR plug domain in the interval 52–178; sequence RRSKEATGLG…LGGAVAFRTK (127 aa). Positions 189-943 constitute a TBDR beta-barrel domain; it reads SWGIQAKTAY…NFSLALEMKF (755 aa). Residues 926–943 carry the TonB C-terminal box motif; sequence GRYAAPGRNFSLALEMKF.

It belongs to the TonB-dependent receptor family.

Its subcellular location is the cell outer membrane. Its function is as follows. Unknown. May be an iron-siderophore receptor. The chain is Lactoferrin-binding protein A (lbpA) from Neisseria meningitidis serogroup B (strain ATCC BAA-335 / MC58).